Consider the following 139-residue polypeptide: Large ribosomal subunit protein uL16c (139 aa).

The span at 1-17 (MLSPKKTKFRKQHRGRM) shows a compositional bias: basic residues. The segment at 1 to 23 (MLSPKKTKFRKQHRGRMKGSASK) is disordered.

It belongs to the universal ribosomal protein uL16 family. Part of the 50S ribosomal subunit.

The protein localises to the plastid. Its subcellular location is the chloroplast. This is Large ribosomal subunit protein uL16c from Pyropia yezoensis (Susabi-nori).